A 604-amino-acid chain; its full sequence is Sulfite reductase [NADPH] flavoprotein alpha-component (604 aa).

Residues Val-65–Leu-203 form the Flavodoxin-like domain. Residues Ser-71–Gly-76, Ser-118–Gly-121, and Leu-154–Cys-163 contribute to the FMN site. One can recognise an FAD-binding FR-type domain in the interval Gln-236 to Pro-453. FAD is bound by residues Thr-324, Leu-358, Arg-392–Ser-395, Thr-410–Ala-412, and Gly-425–Ser-428. NADP(+) is bound by residues Ser-524 to Arg-525, Lys-530 to Gln-534, and Asp-566. Tyr-604 provides a ligand contact to FAD.

Belongs to the NADPH-dependent sulphite reductase flavoprotein subunit CysJ family. The protein in the N-terminal section; belongs to the flavodoxin family. This sequence in the C-terminal section; belongs to the flavoprotein pyridine nucleotide cytochrome reductase family. As to quaternary structure, alpha(8)-beta(8). The alpha component is a flavoprotein, the beta component is a hemoprotein. FAD is required as a cofactor. FMN serves as cofactor.

It catalyses the reaction hydrogen sulfide + 3 NADP(+) + 3 H2O = sulfite + 3 NADPH + 4 H(+). It functions in the pathway sulfur metabolism; hydrogen sulfide biosynthesis; hydrogen sulfide from sulfite (NADPH route): step 1/1. Functionally, component of the sulfite reductase complex that catalyzes the 6-electron reduction of sulfite to sulfide. This is one of several activities required for the biosynthesis of L-cysteine from sulfate. The flavoprotein component catalyzes the electron flow from NADPH -&gt; FAD -&gt; FMN to the hemoprotein component. This chain is Sulfite reductase [NADPH] flavoprotein alpha-component, found in Shewanella sp. (strain ANA-3).